Consider the following 350-residue polypeptide: Holliday junction branch migration complex subunit RuvB (350 aa).

The tract at residues 4-184 is large ATPase domain (RuvB-L); the sequence is ADRIVTASSR…FGIVQRLEFY (181 aa). ATP contacts are provided by residues isoleucine 23, arginine 24, glycine 65, lysine 68, threonine 69, threonine 70, 131–133, arginine 174, tyrosine 184, and arginine 221; that span reads EDF. Threonine 69 is a Mg(2+) binding site. Residues 185–255 are small ATPAse domain (RuvB-S); sequence STEDLATIVR…IADLALNMLD (71 aa). The head domain (RuvB-H) stretch occupies residues 258-350; that stretch reads ERGFDHQDRR…TPDLFEGDIV (93 aa). The DNA site is built by arginine 294, arginine 313, and arginine 318.

Belongs to the RuvB family. In terms of assembly, homohexamer. Forms an RuvA(8)-RuvB(12)-Holliday junction (HJ) complex. HJ DNA is sandwiched between 2 RuvA tetramers; dsDNA enters through RuvA and exits via RuvB. An RuvB hexamer assembles on each DNA strand where it exits the tetramer. Each RuvB hexamer is contacted by two RuvA subunits (via domain III) on 2 adjacent RuvB subunits; this complex drives branch migration. In the full resolvosome a probable DNA-RuvA(4)-RuvB(12)-RuvC(2) complex forms which resolves the HJ.

It localises to the cytoplasm. The enzyme catalyses ATP + H2O = ADP + phosphate + H(+). Functionally, the RuvA-RuvB-RuvC complex processes Holliday junction (HJ) DNA during genetic recombination and DNA repair, while the RuvA-RuvB complex plays an important role in the rescue of blocked DNA replication forks via replication fork reversal (RFR). RuvA specifically binds to HJ cruciform DNA, conferring on it an open structure. The RuvB hexamer acts as an ATP-dependent pump, pulling dsDNA into and through the RuvAB complex. RuvB forms 2 homohexamers on either side of HJ DNA bound by 1 or 2 RuvA tetramers; 4 subunits per hexamer contact DNA at a time. Coordinated motions by a converter formed by DNA-disengaged RuvB subunits stimulates ATP hydrolysis and nucleotide exchange. Immobilization of the converter enables RuvB to convert the ATP-contained energy into a lever motion, pulling 2 nucleotides of DNA out of the RuvA tetramer per ATP hydrolyzed, thus driving DNA branch migration. The RuvB motors rotate together with the DNA substrate, which together with the progressing nucleotide cycle form the mechanistic basis for DNA recombination by continuous HJ branch migration. Branch migration allows RuvC to scan DNA until it finds its consensus sequence, where it cleaves and resolves cruciform DNA. This Stutzerimonas stutzeri (strain A1501) (Pseudomonas stutzeri) protein is Holliday junction branch migration complex subunit RuvB.